The primary structure comprises 151 residues: Cell division protein SepF (151 aa).

Residues 31–53 (EEVEEPRRRSRTGVKQERETGQN) are disordered.

This sequence belongs to the SepF family. Homodimer. Interacts with FtsZ.

The protein localises to the cytoplasm. In terms of biological role, cell division protein that is part of the divisome complex and is recruited early to the Z-ring. Probably stimulates Z-ring formation, perhaps through the cross-linking of FtsZ protofilaments. Its function overlaps with FtsA. The sequence is that of Cell division protein SepF from Halalkalibacterium halodurans (strain ATCC BAA-125 / DSM 18197 / FERM 7344 / JCM 9153 / C-125) (Bacillus halodurans).